The primary structure comprises 396 residues: tRNA-specific 2-thiouridylase MnmA (396 aa).

ATP-binding positions include 11 to 18 and methionine 37; that span reads GLSGGVDS. Residues 97 to 99 form an interaction with target base in tRNA region; it reads NPD. Cysteine 102 acts as the Nucleophile in catalysis. Cysteines 102 and 225 form a disulfide. Glycine 126 contributes to the ATP binding site. The segment at 175–177 is interaction with tRNA; it reads KDQ. The active-site Cysteine persulfide intermediate is cysteine 225. Positions 343-344 are interaction with tRNA; that stretch reads RY.

This sequence belongs to the MnmA/TRMU family.

The protein localises to the cytoplasm. The enzyme catalyses S-sulfanyl-L-cysteinyl-[protein] + uridine(34) in tRNA + AH2 + ATP = 2-thiouridine(34) in tRNA + L-cysteinyl-[protein] + A + AMP + diphosphate + H(+). In terms of biological role, catalyzes the 2-thiolation of uridine at the wobble position (U34) of tRNA, leading to the formation of s(2)U34. This chain is tRNA-specific 2-thiouridylase MnmA, found in Methylibium petroleiphilum (strain ATCC BAA-1232 / LMG 22953 / PM1).